A 473-amino-acid chain; its full sequence is Ribosomal RNA small subunit methyltransferase F (473 aa).

S-adenosyl-L-methionine is bound by residues 123-129 (AAAPGSK), E147, D174, and D192. C245 functions as the Nucleophile in the catalytic mechanism.

It belongs to the class I-like SAM-binding methyltransferase superfamily. RsmB/NOP family.

It is found in the cytoplasm. It catalyses the reaction cytidine(1407) in 16S rRNA + S-adenosyl-L-methionine = 5-methylcytidine(1407) in 16S rRNA + S-adenosyl-L-homocysteine + H(+). Specifically methylates the cytosine at position 1407 (m5C1407) of 16S rRNA. The polypeptide is Ribosomal RNA small subunit methyltransferase F (Vibrio cholerae serotype O1 (strain ATCC 39315 / El Tor Inaba N16961)).